The sequence spans 1510 residues: Cysteine-tryptophan domain-containing zinc finger protein 5 (1510 aa).

A compositionally biased stretch (polar residues) spans 174–196 (YCQRTSSENDSNHSQQLLNSGPE). 4 disordered regions span residues 174 to 198 (YCQR…PEQK), 449 to 497 (SSLD…CAKD), 555 to 574 (KPNY…YVLD), and 582 to 616 (LHTE…DHKI). Residues 454–465 (GFSHKTKSDKCN) show a composition bias toward basic and acidic residues. A compositionally biased stretch (polar residues) spans 467–476 (QPVTTSSQLQ). 2 stretches are compositionally biased toward basic and acidic residues: residues 479–497 (PAKK…CAKD) and 556–574 (PNYD…YVLD). The CW-type zinc-finger motif lies at 645-698 (SEPVDQWVCCDKCETWRLLPYGMNSDTLPKKWRCSMQSWLPGMNNCKLSEGETT). Zn(2+) is bound by residues Cys-654, Cys-657, Cys-678, and Cys-690. Over residues 768–780 (KQKRIESSDKGEK) the composition is skewed to basic and acidic residues. Disordered stretches follow at residues 768–893 (KQKR…RDLF), 1003–1050 (STAA…LDRH), and 1149–1194 (LPIH…VRPD). Positions 781 to 790 (STVTISSGQT) are enriched in polar residues. Basic and acidic residues predominate over residues 874–893 (NSDRGARASDAGKSDPRDLF). Positions 1003–1016 (STAATSSSSKVSSS) are enriched in low complexity. 2 stretches are compositionally biased toward polar residues: residues 1026–1040 (TRTS…SPLR) and 1162–1182 (PDQN…QAKL).

Highly expressed in young panicles. Expressed at low levels in leaf sheaths, nodes, internodes and axillary buds.

It is found in the nucleus. Binds to histones H3K4me1, H3K4me2 and H3K4me3 in GST pull-down assay. May facilitate the recruitment of effectors to mediate gene expression. This Oryza sativa subsp. japonica (Rice) protein is Cysteine-tryptophan domain-containing zinc finger protein 5.